Consider the following 450-residue polypeptide: tRNA-2-methylthio-N(6)-dimethylallyladenosine synthase (450 aa).

In terms of domain architecture, MTTase N-terminal spans 2–119; it reads KKVFVKTYGC…LPDLIARRQR (118 aa). [4Fe-4S] cluster-binding residues include Cys-11, Cys-48, Cys-82, Cys-156, Cys-160, and Cys-163. Residues 142–375 enclose the Radical SAM core domain; sequence RVEGPSAFVS…QATIEENVQR (234 aa). In terms of domain architecture, TRAM spans 378–448; that stretch reads QNMVGTVQRI…PHSLRGEIVV (71 aa).

The protein belongs to the methylthiotransferase family. MiaB subfamily. In terms of assembly, monomer. [4Fe-4S] cluster serves as cofactor.

The protein localises to the cytoplasm. It catalyses the reaction N(6)-dimethylallyladenosine(37) in tRNA + (sulfur carrier)-SH + AH2 + 2 S-adenosyl-L-methionine = 2-methylsulfanyl-N(6)-dimethylallyladenosine(37) in tRNA + (sulfur carrier)-H + 5'-deoxyadenosine + L-methionine + A + S-adenosyl-L-homocysteine + 2 H(+). Catalyzes the methylthiolation of N6-(dimethylallyl)adenosine (i(6)A), leading to the formation of 2-methylthio-N6-(dimethylallyl)adenosine (ms(2)i(6)A) at position 37 in tRNAs that read codons beginning with uridine. This is tRNA-2-methylthio-N(6)-dimethylallyladenosine synthase from Cupriavidus necator (strain ATCC 17699 / DSM 428 / KCTC 22496 / NCIMB 10442 / H16 / Stanier 337) (Ralstonia eutropha).